Reading from the N-terminus, the 191-residue chain is NADH-quinone oxidoreductase subunit B 2 (191 aa).

[4Fe-4S] cluster is bound by residues Cys69, Cys70, Cys134, and Cys164.

The protein belongs to the complex I 20 kDa subunit family. In terms of assembly, NDH-1 is composed of 14 different subunits. Subunits NuoB, C, D, E, F, and G constitute the peripheral sector of the complex. The cofactor is [4Fe-4S] cluster.

It localises to the cell inner membrane. The enzyme catalyses a quinone + NADH + 5 H(+)(in) = a quinol + NAD(+) + 4 H(+)(out). Its function is as follows. NDH-1 shuttles electrons from NADH, via FMN and iron-sulfur (Fe-S) centers, to quinones in the respiratory chain. Couples the redox reaction to proton translocation (for every two electrons transferred, four hydrogen ions are translocated across the cytoplasmic membrane), and thus conserves the redox energy in a proton gradient. The chain is NADH-quinone oxidoreductase subunit B 2 from Gluconacetobacter diazotrophicus (strain ATCC 49037 / DSM 5601 / CCUG 37298 / CIP 103539 / LMG 7603 / PAl5).